The chain runs to 69 residues: Cytochrome c oxidase subunit 8A, mitochondrial (69 aa).

Residues 1–25 constitute a mitochondrion transit peptide; that stretch reads MSVLTPLLLRGLTGSARRLPVLRAQ. The SIFI-degron motif lies at 2-19; it reads SVLTPLLLRGLTGSARRL. Residues 26-36 lie on the Mitochondrial matrix side of the membrane; that stretch reads VHSKPPREKLG. The helical transmembrane segment at 37-60 threads the bilayer; the sequence is TMDVAIGLTSCFVCFLLPSGWVLS. The Mitochondrial intermembrane segment spans residues 61–69; sequence HLETYKKRE.

This sequence belongs to the cytochrome c oxidase VIII family. In terms of assembly, component of the cytochrome c oxidase (complex IV, CIV), a multisubunit enzyme composed of 14 subunits. The complex is composed of a catalytic core of 3 subunits MT-CO1, MT-CO2 and MT-CO3, encoded in the mitochondrial DNA, and 11 supernumerary subunits COX4I, COX5A, COX5B, COX6A, COX6B, COX6C, COX7A, COX7B, COX7C, COX8 and NDUFA4, which are encoded in the nuclear genome. The complex exists as a monomer or a dimer and forms supercomplexes (SCs) in the inner mitochondrial membrane with NADH-ubiquinone oxidoreductase (complex I, CI) and ubiquinol-cytochrome c oxidoreductase (cytochrome b-c1 complex, complex III, CIII), resulting in different assemblies (supercomplex SCI(1)III(2)IV(1) and megacomplex MCI(2)III(2)IV(2)). In response to mitochondrial stress, the precursor protein is ubiquitinated by the SIFI complex in the cytoplasm before mitochondrial import, leading to its degradation. Within the SIFI complex, UBR4 initiates ubiquitin chain that are further elongated or branched by KCMF1.

It is found in the mitochondrion inner membrane. Its pathway is energy metabolism; oxidative phosphorylation. Its function is as follows. Component of the cytochrome c oxidase, the last enzyme in the mitochondrial electron transport chain which drives oxidative phosphorylation. The respiratory chain contains 3 multisubunit complexes succinate dehydrogenase (complex II, CII), ubiquinol-cytochrome c oxidoreductase (cytochrome b-c1 complex, complex III, CIII) and cytochrome c oxidase (complex IV, CIV), that cooperate to transfer electrons derived from NADH and succinate to molecular oxygen, creating an electrochemical gradient over the inner membrane that drives transmembrane transport and the ATP synthase. Cytochrome c oxidase is the component of the respiratory chain that catalyzes the reduction of oxygen to water. Electrons originating from reduced cytochrome c in the intermembrane space (IMS) are transferred via the dinuclear copper A center (CU(A)) of subunit 2 and heme A of subunit 1 to the active site in subunit 1, a binuclear center (BNC) formed by heme A3 and copper B (CU(B)). The BNC reduces molecular oxygen to 2 water molecules using 4 electrons from cytochrome c in the IMS and 4 protons from the mitochondrial matrix. The protein is Cytochrome c oxidase subunit 8A, mitochondrial (COX8A) of Eulemur fulvus fulvus (Brown lemur).